A 293-amino-acid chain; its full sequence is 2-pyrone-4,6-dicarboxylate hydrolase (293 aa).

Positions 1–20 are disordered; that stretch reads MTNDERILSWNETPSKPRYT. Substrate is bound by residues 29–31, Y47, S75, R122, R128, Y154, and H178; that span reads HCH. Catalysis depends on D246, which acts as the Proton acceptor. Residue N251 coordinates substrate.

It belongs to the metallo-dependent hydrolases superfamily. PDC hydrolase family. In terms of assembly, monomer.

The catalysed reaction is 2-oxo-2H-pyran-4,6-dicarboxylate + H2O = (1E)-4-oxobut-1-ene-1,2,4-tricarboxylate + H(+). It functions in the pathway secondary metabolite metabolism; lignin degradation. With respect to regulation, strongly inhibited by 1 mM Zn(2+) ions. Also inhibited by pyridine-2,4-dicarboxylic acid, 5-hydroxyisophthalic acid and 5,5'-dithiobis(2-nitrobenzoic acid) (Ellman reagent). Its function is as follows. Contributes to the degradation of lignin at the level of the protocatechuate 4,5-cleavage pathway. Catalyzes the hydrolysis of 2-pyrone-4,6-dicarboxylate (PDC) to (4E)-oxalomesaconate (OMA). The keto form of OMA can tautomerize into the enol form, 4-carboxy-2-hydroxymuconate (CHM), under certain pH conditions. Also catalyzes the reverse reaction. Is essential for the growth of Sphingobium sp. SYK-6 on vanillate but is not responsible for the growth of this strain on syringate. The polypeptide is 2-pyrone-4,6-dicarboxylate hydrolase (Sphingobium sp. (strain NBRC 103272 / SYK-6)).